The sequence spans 191 residues: Protein LIGHT-DEPENDENT SHORT HYPOCOTYLS 9 (191 aa).

The span at 1–14 (MSSDRHTPTKDPPD) shows a compositional bias: basic and acidic residues. 2 disordered regions span residues 1–41 (MSSD…YESQ) and 153–191 (QAKA…QSFT). Residues 37–165 (RYESQKRRDW…ARGIPYRKKK (129 aa)) enclose the ALOG domain. Basic residues predominate over residues 160 to 169 (PYRKKKRRKT). The Nuclear localization signal signature appears at 163-167 (KKKRR). The span at 181 to 191 (ANSSTPNQSFT) shows a compositional bias: polar residues.

It belongs to the plant homeotic and developmental regulators ALOG protein family.

It is found in the nucleus. Probable transcription regulator that acts as a developmental regulator by promoting cell growth in response to light. The protein is Protein LIGHT-DEPENDENT SHORT HYPOCOTYLS 9 (LSH9) of Arabidopsis thaliana (Mouse-ear cress).